We begin with the raw amino-acid sequence, 353 residues long: Photosystem II protein D1 (353 aa).

Thr2 carries the N-acetylthreonine modification. At Thr2 the chain carries Phosphothreonine. Helical transmembrane passes span 29–46 (NIGWFGVLMIPTLLTATS), 118–133 (HFLLGVACYMGREWEL), and 142–156 (WIAVAYSAPVAAATA). Residue His118 participates in chlorophyll a binding. Position 126 (Tyr126) interacts with pheophytin a. [CaMn4O5] cluster is bound by residues Asp170 and Glu189. Residues 197–218 (FHMLGVAGVFGGSLFSAMHGSL) form a helical membrane-spanning segment. Residue His198 coordinates chlorophyll a. Residues His215 and 264-265 (SF) contribute to the a quinone site. Residue His215 coordinates Fe cation. His272 contributes to the Fe cation binding site. A helical transmembrane segment spans residues 274–288 (FLAAWPVVGIWFTAL). Positions 332, 333, 342, and 344 each coordinate [CaMn4O5] cluster. Positions 345-353 (AVEAPAVNG) are excised as a propeptide.

Belongs to the reaction center PufL/M/PsbA/D family. PSII is composed of 1 copy each of membrane proteins PsbA, PsbB, PsbC, PsbD, PsbE, PsbF, PsbH, PsbI, PsbJ, PsbK, PsbL, PsbM, PsbT, PsbX, PsbY, PsbZ, Psb30/Ycf12, at least 3 peripheral proteins of the oxygen-evolving complex and a large number of cofactors. It forms dimeric complexes. It depends on The D1/D2 heterodimer binds P680, chlorophylls that are the primary electron donor of PSII, and subsequent electron acceptors. It shares a non-heme iron and each subunit binds pheophytin, quinone, additional chlorophylls, carotenoids and lipids. D1 provides most of the ligands for the Mn4-Ca-O5 cluster of the oxygen-evolving complex (OEC). There is also a Cl(-1) ion associated with D1 and D2, which is required for oxygen evolution. The PSII complex binds additional chlorophylls, carotenoids and specific lipids. as a cofactor. Post-translationally, tyr-161 forms a radical intermediate that is referred to as redox-active TyrZ, YZ or Y-Z. In terms of processing, C-terminally processed by CTPA; processing is essential to allow assembly of the oxygen-evolving complex and thus photosynthetic growth.

The protein resides in the plastid. The protein localises to the chloroplast thylakoid membrane. The enzyme catalyses 2 a plastoquinone + 4 hnu + 2 H2O = 2 a plastoquinol + O2. Its function is as follows. Photosystem II (PSII) is a light-driven water:plastoquinone oxidoreductase that uses light energy to abstract electrons from H(2)O, generating O(2) and a proton gradient subsequently used for ATP formation. It consists of a core antenna complex that captures photons, and an electron transfer chain that converts photonic excitation into a charge separation. The D1/D2 (PsbA/PsbD) reaction center heterodimer binds P680, the primary electron donor of PSII as well as several subsequent electron acceptors. In Dumortiera hirsuta (Liverwort), this protein is Photosystem II protein D1.